Reading from the N-terminus, the 315-residue chain is Prephenate dehydratase (315 aa).

The region spanning 3–189 (RIAYLGPEGT…ARTRFVLVGP (187 aa)) is the Prephenate dehydratase domain. In terms of domain architecture, ACT spans 203 to 280 (SVVLRIDNAP…ADVRYLGSWP (78 aa)).

Homodimer.

It catalyses the reaction prephenate + H(+) = 3-phenylpyruvate + CO2 + H2O. It functions in the pathway amino-acid biosynthesis; L-phenylalanine biosynthesis; phenylpyruvate from prephenate: step 1/1. This chain is Prephenate dehydratase (pheA), found in Mycobacterium avium (strain 104).